The primary structure comprises 281 residues: Nucleoid occlusion protein (281 aa).

A DNA-binding region (H-T-H motif) is located at residues 145-164 (EALAQRLGKGQSTIANKLRL).

The protein belongs to the ParB family.

Its subcellular location is the cytoplasm. It is found in the nucleoid. Effects nucleoid occlusion by binding relatively nonspecifically to DNA and preventing the assembly of the division machinery in the vicinity of the nucleoid, especially under conditions that disturb the cell cycle. It helps to coordinate cell division and chromosome segregation by preventing the formation of the Z ring through the nucleoid, which would cause chromosome breakage. The protein is Nucleoid occlusion protein of Geobacillus sp. (strain WCH70).